The sequence spans 128 residues: Small ribosomal subunit protein uS9 (128 aa).

This sequence belongs to the universal ribosomal protein uS9 family.

This is Small ribosomal subunit protein uS9 from Cytophaga hutchinsonii (strain ATCC 33406 / DSM 1761 / CIP 103989 / NBRC 15051 / NCIMB 9469 / D465).